Reading from the N-terminus, the 296-residue chain is Phosphate transport system permease protein PstA (296 aa).

Over 1-28 the chain is Cytoplasmic; the sequence is MAMVEMQTTAALAESRRKMQARRRLKNR. A helical membrane pass occupies residues 29–50; it reads IALTLSMATMAFGLFWLIWILM. Residues 51-82 lie on the Periplasmic side of the membrane; that stretch reads STITRGIDGMSLALFTEMTPPPNTEGGGLANA. Residues 83–102 traverse the membrane as a helical segment; it reads LAGSGLLILWATVFGTPLGI. In terms of domain architecture, ABC transmembrane type-1 spans 83–286; the sequence is LAGSGLLILW…LCVLLLNILA (204 aa). Over 103 to 126 the chain is Cytoplasmic; it reads MAGIYLAEYGRKSWLAEVIRFIND. Residues 127–146 traverse the membrane as a helical segment; that stretch reads ILLSAPSIVVGLFVYTIVVA. The Periplasmic segment spans residues 147 to 150; it reads QMEH. The helical transmembrane segment at 151–169 threads the bilayer; it reads FSGWAGVIALALLQVPIVI. At 170–204 the chain is on the cytoplasmic side; sequence RTTENMLKLVPYSLREAAYALGTPKWKMISAITLK. A helical transmembrane segment spans residues 205-223; sequence ASVSGIMTGILLAIARIAG. Over 224 to 266 the chain is Periplasmic; it reads ETAPLLFTALSNQFWSTDMMQPIANLPVTIFKFAMSPFAEWQQ. A helical transmembrane segment spans residues 267–286; the sequence is LAWAGVLIITLCVLLLNILA. Residues 287-296 lie on the Cytoplasmic side of the membrane; the sequence is RVVFAKNKHG.

This sequence belongs to the binding-protein-dependent transport system permease family. CysTW subfamily.

The protein localises to the cell inner membrane. In terms of biological role, part of the binding-protein-dependent transport system for phosphate; probably responsible for the translocation of the substrate across the membrane. The chain is Phosphate transport system permease protein PstA (pstA) from Escherichia coli (strain K12).